The following is a 257-amino-acid chain: S-methyl-5'-thioadenosine phosphorylase (257 aa).

Residues Ser10 and 50–51 (RH) contribute to the phosphate site. Met180 provides a ligand contact to substrate. Thr181 lines the phosphate pocket. 204 to 206 (DYD) provides a ligand contact to substrate.

The protein belongs to the PNP/MTAP phosphorylase family. MTAP subfamily. As to quaternary structure, homohexamer. Dimer of a homotrimer.

It catalyses the reaction S-methyl-5'-thioadenosine + phosphate = 5-(methylsulfanyl)-alpha-D-ribose 1-phosphate + adenine. It functions in the pathway amino-acid biosynthesis; L-methionine biosynthesis via salvage pathway; S-methyl-5-thio-alpha-D-ribose 1-phosphate from S-methyl-5'-thioadenosine (phosphorylase route): step 1/1. In terms of biological role, catalyzes the reversible phosphorylation of S-methyl-5'-thioadenosine (MTA) to adenine and 5-methylthioribose-1-phosphate. Involved in the breakdown of MTA, a major by-product of polyamine biosynthesis. Responsible for the first step in the methionine salvage pathway after MTA has been generated from S-adenosylmethionine. Has broad substrate specificity with 6-aminopurine nucleosides as preferred substrates. The chain is S-methyl-5'-thioadenosine phosphorylase from Pyrococcus horikoshii (strain ATCC 700860 / DSM 12428 / JCM 9974 / NBRC 100139 / OT-3).